Reading from the N-terminus, the 708-residue chain is Leukotoxin translocation ATP-binding protein LktB (708 aa).

A Peptidase C39 domain is found at 1–126 (MEVNHQSNDL…SCYQGKIILV (126 aa)). In terms of domain architecture, ABC transmembrane type-1 spans 155–437 (FLETLLVSIF…LAQLWQDFTQ (283 aa)). 5 consecutive transmembrane segments (helical) span residues 159-179 (LLVSIFLQIFALITPLFFQVV), 192-212 (LNIITVALAIVIIFEIVLSGL), 270-290 (ALTSVLDLLFSFIFFAVMWYY), 296-316 (LVILGSLPCYILWSIFISPIL), and 389-409 (VMVINLWLGAHLVISGDLSIG). Positions 469–704 (IAFKNIRFRY…NNGLYSYLHQ (236 aa)) constitute an ABC transporter domain. 503 to 510 (GRSGSGKS) contributes to the ATP binding site.

It belongs to the ABC transporter superfamily. Protein-1 exporter (TC 3.A.1.109) family. In terms of assembly, homodimer.

The protein resides in the cell inner membrane. It catalyses the reaction ATP + H2O + proteinSide 1 = ADP + phosphate + proteinSide 2.. In terms of biological role, part of the ABC transporter complex LktBD involved in leukotoxin export. Transmembrane domains (TMD) form a pore in the inner membrane and the ATP-binding domain (NBD) is responsible for energy generation. This chain is Leukotoxin translocation ATP-binding protein LktB (lktB), found in Pasteurella haemolytica-like sp. (strain 5943B).